Here is a 199-residue protein sequence, read N- to C-terminus: MVGKALGLEFNKKIINTLKGEQMNPDFIKINPQHSIPTLVDNGFTIWESRAILVYLVEKYGKDDALYPKDIQKQAVINQRLYFDMALMYPTLANYYYKAFTTGQFGSEEDYKKVQETFDFLNTFLEGQDYVAGDQYTVADIAILANVSNFDVVGFDISKYPNVARWYDHVKKITPGWEENWAGALDVKKRIEEKQNAAK.

A GST N-terminal domain is found at 1 to 64 (MVGKALGLEF…YLVEKYGKDD (64 aa)). Residues 34–36 (HSI) and 48–50 (ESR) contribute to the glutathione site. Positions 70–199 (DIQKQAVINQ…RIEEKQNAAK (130 aa)) constitute a GST C-terminal domain.

This sequence belongs to the GST superfamily. Delta family. Homodimer.

Has no glutathione S-transferase activity. This Drosophila melanogaster (Fruit fly) protein is Inactive glutathione S-transferase D3.